A 534-amino-acid polypeptide reads, in one-letter code: 5'-nucleotidase domain-containing protein 3 (534 aa).

Residue Asp-104 is the Nucleophile of the active site. 2 residues coordinate Mg(2+): Asp-104 and Asp-106. Asp-106 functions as the Proton donor in the catalytic mechanism. 234–242 (KEAIRDVHV) contacts substrate. Residue Asp-372 coordinates Mg(2+).

The protein belongs to the 5'(3')-deoxyribonucleotidase family. The cofactor is Mg(2+).

This chain is 5'-nucleotidase domain-containing protein 3 (nt5dc3), found in Xenopus tropicalis (Western clawed frog).